The primary structure comprises 1030 residues: Germ cell nuclear acidic protein (1030 aa).

6 disordered regions span residues 1 to 59 (MADH…TEDT), 196 to 245 (EWNG…TQLA), 266 to 361 (KRLA…VSSI), 375 to 433 (TMES…EQFL), 457 to 594 (LKRS…DLTY), and 699 to 764 (KLGI…PVAS). The segment covering 20-33 (APKDHPEKRNDQKT) has biased composition (basic and acidic residues). Composition is skewed to polar residues over residues 298–316 (EPNT…TIHN) and 329–349 (ETSS…STSG). Residues 505–516 (LRTNQTPLNSTR) show a composition bias toward polar residues. Basic and acidic residues-rich tracts occupy residues 541 to 553 (NHID…KLID) and 578 to 594 (DSDK…DLTY). The segment covering 720-748 (TPKTAPPKGTAPPKTSAPPKVSTPPKSTK) has biased composition (low complexity).

This sequence belongs to the serine-aspartate repeat-containing protein (SDr) family.

It localises to the cytoplasm. It is found in the chromosome. Its function is as follows. May play a role in DNA-protein cross-links (DPCs) clearance, ensuring the genomic stability by protecting germ cells and early embryos from various sources of damage. Limits replication stress and DNA double-strand breaks. In Drosophila melanogaster (Fruit fly), this protein is Germ cell nuclear acidic protein.